The chain runs to 258 residues: Aquaglyceroporin (258 aa).

Residues 1-16 are Cytoplasmic-facing; that stretch reads MKVTFGNEYIKNFLGE. A helical transmembrane segment spans residues 17–37; it reads FIGTFVLMFLGEGTTANHFAV. The Extracellular portion of the chain corresponds to 38 to 45; that stretch reads PIKNDWLR. The helical transmembrane segment at 46–66 threads the bilayer; that stretch reads LCIGWGLGVFFGILISAKLSG. Residues A67 and N70 each coordinate glycerol. Residues 67–87 lie on the Cytoplasmic side of the membrane; the sequence is AHLNLAVTVGLSTIKKFNYKQ. Residues 88–108 form a helical membrane-spanning segment; that stretch reads IPLYFAGQLLGALSATASVYG. Residues 109 to 133 are Extracellular-facing; sequence LYYGFVSDQTIPKFSWETGKHANVH. A helical transmembrane segment spans residues 134–154; it reads IASAFMHEFILTGILLLIILS. At 155–171 the chain is on the cytoplasmic side; sequence VTDENICGKFHVLKVSS. The chain crosses the membrane as a helical span at residues 172-192; the sequence is IVGLAIICIGISFGGNTGFAL. Residues G189, F190, N193, and R196 each coordinate glycerol. Residues 193–217 are Extracellular-facing; the sequence is NPSRDLGARILSAIAYGFEAFTRDK. A helical transmembrane segment spans residues 218–238; that stretch reads CYFWIPLIAPIIGSIIFCQIY. The Cytoplasmic segment spans residues 239-258; that stretch reads DKIVAPLVVISEHDKGALEI.

It belongs to the MIP/aquaporin (TC 1.A.8) family.

The protein resides in the cell membrane. The catalysed reaction is H2O(in) = H2O(out). It catalyses the reaction glycerol(in) = glycerol(out). It carries out the reaction urea(in) = urea(out). In terms of biological role, mediates water and glycerol transport across the cell membrane. Permeable to urea. Required for efficient progression of parasites through the liver stages. This is Aquaglyceroporin from Plasmodium berghei (strain Anka).